A 212-amino-acid polypeptide reads, in one-letter code: Holliday junction branch migration complex subunit RuvA (212 aa).

Positions 1–70 (MISYLKGSPI…EDQQILYGFS (70 aa)) are domain I. The interval 71 to 149 (TTAERELFRQ…QWRKMVGVTV (79 aa)) is domain II. Residues 150–160 (TSSAAMPSLEI) are flexible linker. The segment at 160 to 212 (ILEDIEMTLLALGYTNEEINKAISTLSQDNLMLKNTNTEEWIKEAIAWLSQGT) is domain III.

Belongs to the RuvA family. Homotetramer. Forms an RuvA(8)-RuvB(12)-Holliday junction (HJ) complex. HJ DNA is sandwiched between 2 RuvA tetramers; dsDNA enters through RuvA and exits via RuvB. An RuvB hexamer assembles on each DNA strand where it exits the tetramer. Each RuvB hexamer is contacted by two RuvA subunits (via domain III) on 2 adjacent RuvB subunits; this complex drives branch migration. In the full resolvosome a probable DNA-RuvA(4)-RuvB(12)-RuvC(2) complex forms which resolves the HJ.

The protein resides in the cytoplasm. The RuvA-RuvB-RuvC complex processes Holliday junction (HJ) DNA during genetic recombination and DNA repair, while the RuvA-RuvB complex plays an important role in the rescue of blocked DNA replication forks via replication fork reversal (RFR). RuvA specifically binds to HJ cruciform DNA, conferring on it an open structure. The RuvB hexamer acts as an ATP-dependent pump, pulling dsDNA into and through the RuvAB complex. HJ branch migration allows RuvC to scan DNA until it finds its consensus sequence, where it cleaves and resolves the cruciform DNA. The protein is Holliday junction branch migration complex subunit RuvA of Crocosphaera subtropica (strain ATCC 51142 / BH68) (Cyanothece sp. (strain ATCC 51142)).